A 399-amino-acid polypeptide reads, in one-letter code: MSFEISVEEIEELIETGNLNIDHALKELGATSQSSLNKPPSQSSRTEGNDGGTKISRNPAPVEAPAHTSTAQRSHNEENESGRQNLDSLSMISNKPQTGTLLMGSDTQLPSPSKTYQGLILDAKKRALNEPRRDQKITNEHGSMNDTRIFKRGGNIDTRKEAWVTQNQRSRTQPPLQDIEESTRFHGLTEEPQYPSGAIHAAHQSNQLPLSKNAHVEDVPKFANYASEILDAIKALEVRLDRIEGKVDKIMLTQNTIQQTKNDTQQIKGSLATIEGLITTMKIMDPGVPSKVSLRSLNKESEQVPIIVTGNGDVSKFVDQDNTITLDSLARPILSGTKQKTDERRAGVRIDALKITVSEMIRDLFGDCDKSKKLLESINMATTEQDINLIKTNALRSIT.

2 stretches are compositionally biased toward polar residues: residues 30 to 46 (ATSQ…SSRT) and 82 to 112 (GRQN…LPSP). Residues 30–112 (ATSQSSLNKP…MGSDTQLPSP (83 aa)) are disordered. The segment at 224 to 287 (NYASEILDAI…ITTMKIMDPG (64 aa)) is multimerization. Residues 226–253 (ASEILDAIKALEVRLDRIEGKVDKIMLT) are a coiled coil.

It belongs to the rubulavirus/avulavirus P protein family. In terms of assembly, homotetramer. Interacts (via multimerization domain) with polymerase L; this interaction forms the polymerase L-P complex. Interacts (via N-terminus) with N0 (via Ncore); this interaction allows P to chaperon N0 to avoid N polymerization before encapsidation. Interacts (via C-terminus) with N-RNA template; this interaction positions the polymerase on the template for both transcription and replication.

In terms of biological role, essential cofactor of the RNA polymerase L that plays a central role in the transcription and replication by forming the polymerase complex with RNA polymerase L and recruiting L to the genomic N-RNA template for RNA synthesis. Also plays a central role in the encapsidation of nascent RNA chains by forming the encapsidation complex with the nucleocapsid protein N (N-P complex). Acts as a chaperone for newly synthesized free N protein, so-called N0, allowing encapsidation of nascent RNA chains during replication. The nucleoprotein protein N prevents excessive phosphorylation of P, which leads to down-regulation of viral transcription/ replication. Participates, together with N, in the formation of viral factories (viroplasms), which are large inclusions in the host cytoplasm where replication takes place. This Human parainfluenza 4a virus (strain Toshiba) (HPIV-4a) protein is Phosphoprotein (P/V).